The primary structure comprises 190 residues: Threonylcarbamoyl-AMP synthase (190 aa).

The region spanning 7 to 190 (TGSIAAVVDL…ALTGELFRQG (184 aa)) is the YrdC-like domain.

Belongs to the SUA5 family. TsaC subfamily.

The protein resides in the cytoplasm. It carries out the reaction L-threonine + hydrogencarbonate + ATP = L-threonylcarbamoyladenylate + diphosphate + H2O. Its function is as follows. Required for the formation of a threonylcarbamoyl group on adenosine at position 37 (t(6)A37) in tRNAs that read codons beginning with adenine. Catalyzes the conversion of L-threonine, HCO(3)(-)/CO(2) and ATP to give threonylcarbamoyl-AMP (TC-AMP) as the acyladenylate intermediate, with the release of diphosphate. The sequence is that of Threonylcarbamoyl-AMP synthase from Salmonella paratyphi A (strain ATCC 9150 / SARB42).